The chain runs to 774 residues: Ion-translocating oxidoreductase complex subunit C (774 aa).

4Fe-4S ferredoxin-type domains lie at 369 to 397 (GEPQEEQSCIRCSACADACPADLLPQQLY) and 407 to 436 (KATTHNIADCIECGACAWVCPSNIPLVQYF). Residues Cys377, Cys380, Cys383, Cys387, Cys416, Cys419, Cys422, and Cys426 each coordinate [4Fe-4S] cluster. The interval 602-750 (KLEQQQANAE…EPEEQIDPRK (149 aa)) is disordered.

It belongs to the 4Fe4S bacterial-type ferredoxin family. RnfC subfamily. In terms of assembly, the complex is composed of six subunits: RsxA, RsxB, RsxC, RsxD, RsxE and RsxG. [4Fe-4S] cluster serves as cofactor.

Its subcellular location is the cell inner membrane. In terms of biological role, part of a membrane-bound complex that couples electron transfer with translocation of ions across the membrane. Required to maintain the reduced state of SoxR. This chain is Ion-translocating oxidoreductase complex subunit C, found in Escherichia coli O6:K15:H31 (strain 536 / UPEC).